A 353-amino-acid polypeptide reads, in one-letter code: UDP-N-acetylglucosamine--N-acetylmuramyl-(pentapeptide) pyrophosphoryl-undecaprenol N-acetylglucosamine transferase (353 aa).

Residues 10 to 12 (TGG), N124, S183, and Q283 each bind UDP-N-acetyl-alpha-D-glucosamine.

Belongs to the glycosyltransferase 28 family. MurG subfamily.

The protein resides in the cell inner membrane. It carries out the reaction di-trans,octa-cis-undecaprenyl diphospho-N-acetyl-alpha-D-muramoyl-L-alanyl-D-glutamyl-meso-2,6-diaminopimeloyl-D-alanyl-D-alanine + UDP-N-acetyl-alpha-D-glucosamine = di-trans,octa-cis-undecaprenyl diphospho-[N-acetyl-alpha-D-glucosaminyl-(1-&gt;4)]-N-acetyl-alpha-D-muramoyl-L-alanyl-D-glutamyl-meso-2,6-diaminopimeloyl-D-alanyl-D-alanine + UDP + H(+). The protein operates within cell wall biogenesis; peptidoglycan biosynthesis. Its function is as follows. Cell wall formation. Catalyzes the transfer of a GlcNAc subunit on undecaprenyl-pyrophosphoryl-MurNAc-pentapeptide (lipid intermediate I) to form undecaprenyl-pyrophosphoryl-MurNAc-(pentapeptide)GlcNAc (lipid intermediate II). This chain is UDP-N-acetylglucosamine--N-acetylmuramyl-(pentapeptide) pyrophosphoryl-undecaprenol N-acetylglucosamine transferase, found in Helicobacter pylori (strain G27).